The primary structure comprises 977 residues: Pro-apoptotic serine protease NMA111 (977 aa).

Residues 1–36 (MTIQAHKRTLSEVSTSSVGQLKRREGYTEDYTDEGS) form a disordered region. Positions 64–254 (VVSVHFAQVA…LPLDRILRAL (191 aa)) are serine protease. Residues His102, Asp133, and Ser216 each act as charge relay system in the active site. 2 consecutive PDZ domains span residues 271–356 (QWLL…LVVQ) and 749–835 (SVLQ…VRKG).

The protein belongs to the peptidase S1C family.

The protein localises to the nucleus. Its function is as follows. Nuclear serine protease which mediates apoptosis. The chain is Pro-apoptotic serine protease NMA111 (NMA111) from Eremothecium gossypii (strain ATCC 10895 / CBS 109.51 / FGSC 9923 / NRRL Y-1056) (Yeast).